Reading from the N-terminus, the 102-residue chain is uncharacterized protein (102 aa).

Residues 7–23 (IVFVSCVILGLAACSSQ) traverse the membrane as a helical segment.

The protein localises to the membrane. This is an uncharacterized protein from Haemophilus influenzae (strain ATCC 51907 / DSM 11121 / KW20 / Rd).